The sequence spans 259 residues: Probable ABC transporter permease protein RF_0080 (259 aa).

5 helical membrane-spanning segments follow: residues 13 to 35 (TIKF…SSII), 49 to 69 (LFIG…SGAV), 148 to 168 (VIAA…IGVM), 195 to 215 (PIDV…ISII), and 237 to 257 (AVVN…ELFF).

It belongs to the MlaE permease family.

It localises to the cell inner membrane. Its function is as follows. Could be part of an ABC transporter complex. The sequence is that of Probable ABC transporter permease protein RF_0080 from Rickettsia felis (strain ATCC VR-1525 / URRWXCal2) (Rickettsia azadi).